Here is a 188-residue protein sequence, read N- to C-terminus: Inosine triphosphate pyrophosphatase (188 aa).

7-12 (TGNAGK) serves as a coordination point for ITP. Glu-36 is a binding site for Mg(2+). Residues Lys-48, 64 to 65 (DT), Lys-81, 140 to 143 (FGWN), Lys-163, and 168 to 169 (HR) contribute to the ITP site.

This sequence belongs to the HAM1 NTPase family. Homodimer. It depends on Mg(2+) as a cofactor. The cofactor is Mn(2+).

The protein localises to the cytoplasm. It localises to the nucleus. It catalyses the reaction ITP + H2O = IMP + diphosphate + H(+). It carries out the reaction dITP + H2O = dIMP + diphosphate + H(+). The catalysed reaction is XTP + H2O = XMP + diphosphate + H(+). In terms of biological role, pyrophosphatase that hydrolyzes non-canonical purine nucleotides such as inosine triphosphate (ITP), deoxyinosine triphosphate (dITP) or xanthosine 5'-triphosphate (XTP) to their respective monophosphate derivatives. The enzyme does not distinguish between the deoxy- and ribose forms. Probably excludes non-canonical purines from RNA and DNA precursor pools, thus preventing their incorporation into RNA and DNA and avoiding chromosomal lesions. This chain is Inosine triphosphate pyrophosphatase, found in Yarrowia lipolytica (strain CLIB 122 / E 150) (Yeast).